The following is an 806-amino-acid chain: Lon protease (806 aa).

The 194-residue stretch at 14–207 (YPVLPLRDIV…KALGFMEGEI (194 aa)) folds into the Lon N-terminal domain. ATP is bound at residue 359-366 (GPPGVGKT). In terms of domain architecture, Lon proteolytic spans 594–775 (DDQVGVVTGL…GEVIAHALLR (182 aa)). Catalysis depends on residues Ser-681 and Lys-724. A disordered region spans residues 786 to 806 (SQPAALPSVDSQDEAGTSIAH).

It belongs to the peptidase S16 family. As to quaternary structure, homohexamer. Organized in a ring with a central cavity.

Its subcellular location is the cytoplasm. The enzyme catalyses Hydrolysis of proteins in presence of ATP.. Functionally, ATP-dependent serine protease that mediates the selective degradation of mutant and abnormal proteins as well as certain short-lived regulatory proteins. Required for cellular homeostasis and for survival from DNA damage and developmental changes induced by stress. Degrades polypeptides processively to yield small peptide fragments that are 5 to 10 amino acids long. Binds to DNA in a double-stranded, site-specific manner. In R.meliloti it is important for controlling the turnover of a constitutively expressed protein(s) that, when unregulated, disrupts normal nodule formation and normal growth. In Rhizobium meliloti (strain 1021) (Ensifer meliloti), this protein is Lon protease.